A 131-amino-acid polypeptide reads, in one-letter code: Small ribosomal subunit protein uS8 (131 aa).

This sequence belongs to the universal ribosomal protein uS8 family. In terms of assembly, part of the 30S ribosomal subunit. Contacts proteins S5 and S12.

Functionally, one of the primary rRNA binding proteins, it binds directly to 16S rRNA central domain where it helps coordinate assembly of the platform of the 30S subunit. The polypeptide is Small ribosomal subunit protein uS8 (Nitrosospira multiformis (strain ATCC 25196 / NCIMB 11849 / C 71)).